Consider the following 126-residue polypeptide: Protein ApaG (126 aa).

The ApaG domain maps to S2–H126.

The protein is Protein ApaG of Azotobacter vinelandii (strain DJ / ATCC BAA-1303).